We begin with the raw amino-acid sequence, 347 residues long: Probable magnetosome protein Mms36 (347 aa).

Residues 25–45 (VLVLYLAIAVVVAVLAWPWLA) form a helical membrane-spanning segment.

Its subcellular location is the magnetosome membrane. Functionally, the 4 genes of this operon collectively influence magnetosome size and number. This is Probable magnetosome protein Mms36 from Magnetospirillum gryphiswaldense (strain DSM 6361 / JCM 21280 / NBRC 15271 / MSR-1).